The sequence spans 751 residues: WD repeat-containing protein 91 (751 aa).

Positions Ile188 to Glu212 form a coiled coil. The interval Leu264–Arg395 is disordered. Residues Ser278 to Ser287 show a composition bias toward polar residues. Residues Arg334 to Leu346 are compositionally biased toward basic and acidic residues. A compositionally biased stretch (polar residues) spans Gln377–Ser391. WD repeat units follow at residues Glu410 to Ala449, Ile452 to Glu492, Glu497 to Gln559, Pro564 to Ser603, Ala606 to Ser645, Val668 to Glu706, and Gly713 to Ser751.

The protein belongs to the WD repeat WDR91 family.

Its subcellular location is the early endosome membrane. It localises to the late endosome membrane. In terms of biological role, functions as a negative regulator of the PI3 kinase/PI3K activity associated with endosomal membranes. By modifying the phosphatidylinositol 3-phosphate/PtdInsP3 content of endosomal membranes may regulate endosome fusion, recycling, sorting and early to late endosome transport. The protein is WD repeat-containing protein 91 of Gallus gallus (Chicken).